A 93-amino-acid polypeptide reads, in one-letter code: Large ribosomal subunit protein eL29 (93 aa).

The span at 1 to 31 (MAKSKNHSTHHKNRKDHRNGIKKAVVHKKTS) shows a compositional bias: basic residues. The segment at 1–33 (MAKSKNHSTHHKNRKDHRNGIKKAVVHKKTSSK) is disordered.

It belongs to the eukaryotic ribosomal protein eL29 family.

The protein is Large ribosomal subunit protein eL29 (rpl29) of Dictyostelium discoideum (Social amoeba).